Consider the following 419-residue polypeptide: Gamma-glutamyl phosphate reductase (419 aa).

Belongs to the gamma-glutamyl phosphate reductase family.

The protein localises to the cytoplasm. The enzyme catalyses L-glutamate 5-semialdehyde + phosphate + NADP(+) = L-glutamyl 5-phosphate + NADPH + H(+). The protein operates within amino-acid biosynthesis; L-proline biosynthesis; L-glutamate 5-semialdehyde from L-glutamate: step 2/2. Its function is as follows. Catalyzes the NADPH-dependent reduction of L-glutamate 5-phosphate into L-glutamate 5-semialdehyde and phosphate. The product spontaneously undergoes cyclization to form 1-pyrroline-5-carboxylate. The sequence is that of Gamma-glutamyl phosphate reductase from Mannheimia succiniciproducens (strain KCTC 0769BP / MBEL55E).